We begin with the raw amino-acid sequence, 329 residues long: MEPWPLTFLLLLLLLLWLQGCVSGHSNENLYRKVWRREGETLSVQCSYKNRRNLVEAKSWCKVKKKKCDHNFTRSWVRGPSYSLRDDAKVKVVRITMEALRVQDSGRYWCMRNTAGHFYPLVGFQLEVYPALTTERNVPHTHLTNTPMDGFVTTGQVHISDPHAPFTSDVTMFTSEVTMFTSGLLTLASGTTTPTPVTGYSFIDTSGTVTEPERNTESQPATLSPSNARSFSADPVTTSTMSRHQSSSLSTTGTCHPLTPNRSQETYIPAMVVVLTFLPAPVVLVVAYGFWKKRHMGRYNLGSNYAKPWIHLPEGPETPWKPAWSKITQ.

Residues methionine 1–glycine 24 form the signal peptide. An Ig-like V-type domain is found at histidine 25–leucine 126. At histidine 25–alanine 270 the chain is on the extracellular side. 2 disulfide bridges follow: cysteine 46/cysteine 110 and cysteine 61/cysteine 68. The interval phenylalanine 202–threonine 259 is disordered. Residues glutamate 217–threonine 259 are compositionally biased toward polar residues. N-linked (GlcNAc...) asparagine glycosylation is present at asparagine 261. Residues methionine 271 to tryptophan 291 form a helical membrane-spanning segment. The Cytoplasmic segment spans residues lysine 292–glutamine 329.

In terms of assembly, interacts with CD276 and this interaction enhances T-cell activation. As to expression, detected in B-lymphocytes and macrophages. Detected in spleen, lymph nodes, blood, bone marrow and cells from the peritoneal cavity (at protein level).

Its subcellular location is the cell membrane. Functionally, cell surface receptor that may play a role in the innate and adaptive immune response. Acts as a counter-receptor for CD276 and interaction with CD276 on T-cells enhances T-cell activation. The protein is Trem-like transcript 2 protein (Treml2) of Mus musculus (Mouse).